We begin with the raw amino-acid sequence, 351 residues long: Protein arginine N-methyltransferase 1 (351 aa).

The region spanning 30-331 is the SAM-dependent MTase PRMT-type domain; it reads KDYYFDSYAH…KNNRDLDFTV (302 aa). 5 residues coordinate S-adenosyl-L-methionine: histidine 43, arginine 52, glycine 76, glutamate 98, and glutamate 127. Active-site residues include glutamate 142 and glutamate 151.

It belongs to the class I-like SAM-binding methyltransferase superfamily. Protein arginine N-methyltransferase family. In terms of assembly, homodimer. Homooctamer; individual homodimers associates to form a homooctamer and homooligomerization is required for proper localization to the cell membrane. Individual homodimers can associate to form a homohexamer. Component of a complex with lsm14a/rap55a. Interacts with cirbp.

It localises to the nucleus. The protein resides in the nucleoplasm. It is found in the cytoplasm. Its subcellular location is the cytosol. The enzyme catalyses L-arginyl-[protein] + 2 S-adenosyl-L-methionine = N(omega),N(omega)-dimethyl-L-arginyl-[protein] + 2 S-adenosyl-L-homocysteine + 2 H(+). The catalysed reaction is L-arginyl-[protein] + S-adenosyl-L-methionine = N(omega)-methyl-L-arginyl-[protein] + S-adenosyl-L-homocysteine + H(+). It carries out the reaction N(omega)-methyl-L-arginyl-[protein] + S-adenosyl-L-methionine = N(omega),N(omega)-dimethyl-L-arginyl-[protein] + S-adenosyl-L-homocysteine + H(+). In terms of biological role, arginine methyltransferase that methylates (mono and asymmetric dimethylation) the guanidino nitrogens of arginyl residues present in target proteins. Constitutes the main enzyme that mediates monomethylation and asymmetric dimethylation of histone H4 'Arg-3' (H4R3me1 and H4R3me2a, respectively), a specific tag for epigenetic transcriptional activation. Methylates ilf3 to regulate its DNA-binding activity. Required for neural induction, playing a key role in the control of epidermal versus neural cell fate choice. Methylates cirbp to regulate its subcellular location. Acts transiently during metamorphosis as a transcription coactivator, enhancing thyroid hormone (T3) receptor (TR)-mediated transcription by enhancing TR binding to the T3 response element (TRE), and histone modification through recruitment of other coactivators. The polypeptide is Protein arginine N-methyltransferase 1 (Xenopus tropicalis (Western clawed frog)).